The chain runs to 279 residues: 2-dehydro-3-deoxyphosphooctonate aldolase (279 aa).

It belongs to the KdsA family.

It localises to the cytoplasm. The enzyme catalyses D-arabinose 5-phosphate + phosphoenolpyruvate + H2O = 3-deoxy-alpha-D-manno-2-octulosonate-8-phosphate + phosphate. Its pathway is carbohydrate biosynthesis; 3-deoxy-D-manno-octulosonate biosynthesis; 3-deoxy-D-manno-octulosonate from D-ribulose 5-phosphate: step 2/3. It participates in bacterial outer membrane biogenesis; lipopolysaccharide biosynthesis. The protein is 2-dehydro-3-deoxyphosphooctonate aldolase of Methylobacillus flagellatus (strain ATCC 51484 / DSM 6875 / VKM B-1610 / KT).